An 82-amino-acid polypeptide reads, in one-letter code: RNA-binding protein Hfq (82 aa).

One can recognise a Sm domain in the interval 11–71; the sequence is DTFLNHVRKT…ISTIMPGAPI (61 aa).

It belongs to the Hfq family. Homohexamer.

In terms of biological role, RNA chaperone that binds small regulatory RNA (sRNAs) and mRNAs to facilitate mRNA translational regulation in response to envelope stress, environmental stress and changes in metabolite concentrations. Also binds with high specificity to tRNAs. This chain is RNA-binding protein Hfq, found in Rhodopseudomonas palustris (strain HaA2).